The primary structure comprises 106 residues: U1-lycotoxin-Ls1b (106 aa).

The signal sequence occupies residues 1 to 19 (MKVLVVVALLVTLISYSSS). A propeptide spanning residues 20–40 (EGIDDLEADELLSLMANEQTR) is cleaved from the precursor. 4 cysteine pairs are disulfide-bonded: C43-C58, C50-C67, C57-C85, and C69-C83.

It belongs to the neurotoxin 19 (CSTX) family. 04 (U1-Lctx) subfamily. Expressed by the venom gland.

Its subcellular location is the secreted. The polypeptide is U1-lycotoxin-Ls1b (Lycosa singoriensis (Wolf spider)).